The chain runs to 108 residues: UPF0060 membrane protein DSY4629 (108 aa).

4 helical membrane passes run 5–25, 31–51, 60–80, and 86–106; these read IILF…VWLW, PFWY…IPTL, VYAA…WGID, and NYDW…LWAP.

The protein belongs to the UPF0060 family.

The protein localises to the cell membrane. The polypeptide is UPF0060 membrane protein DSY4629 (Desulfitobacterium hafniense (strain Y51)).